The primary structure comprises 325 residues: Beta-ketoacyl-[acyl-carrier-protein] synthase III (325 aa).

Residues Cys114 and His252 contribute to the active site. The interval 253-257 (QANFR) is ACP-binding. Asn282 is a catalytic residue.

It belongs to the thiolase-like superfamily. FabH family. As to quaternary structure, homodimer.

The protein localises to the cytoplasm. It carries out the reaction malonyl-[ACP] + acetyl-CoA + H(+) = 3-oxobutanoyl-[ACP] + CO2 + CoA. Its pathway is lipid metabolism; fatty acid biosynthesis. Its function is as follows. Catalyzes the condensation reaction of fatty acid synthesis by the addition to an acyl acceptor of two carbons from malonyl-ACP. Catalyzes the first condensation reaction which initiates fatty acid synthesis and may therefore play a role in governing the total rate of fatty acid production. Possesses both acetoacetyl-ACP synthase and acetyl transacylase activities. Its substrate specificity determines the biosynthesis of branched-chain and/or straight-chain of fatty acids. The sequence is that of Beta-ketoacyl-[acyl-carrier-protein] synthase III from Novosphingobium aromaticivorans (strain ATCC 700278 / DSM 12444 / CCUG 56034 / CIP 105152 / NBRC 16084 / F199).